A 78-amino-acid polypeptide reads, in one-letter code: Acyl carrier protein (78 aa).

Positions 2 to 77 (SNFEERVKKI…AAIDYVVSSA (76 aa)) constitute a Carrier domain. Position 37 is an O-(pantetheine 4'-phosphoryl)serine (Ser-37).

This sequence belongs to the acyl carrier protein (ACP) family. Post-translationally, 4'-phosphopantetheine is transferred from CoA to a specific serine of apo-ACP by AcpS. This modification is essential for activity because fatty acids are bound in thioester linkage to the sulfhydryl of the prosthetic group.

The protein resides in the cytoplasm. The protein operates within lipid metabolism; fatty acid biosynthesis. Carrier of the growing fatty acid chain in fatty acid biosynthesis. Is probably involved in the biosynthesis of docosahexaenoic acid (DHA) which is produced by this bacterium as a fatty acyl component in its membrane lipid. The polypeptide is Acyl carrier protein (Moritella marina (Vibrio marinus)).